Consider the following 387-residue polypeptide: MNIHEYQAKAIFVDNGIPTLKGKVAFSVDEAVANAKELGGSVWAVKAQIHAGGRGLGGGVKIAKNLDEVKDYASKILGMNLVTHQTGPEGKLVQKLYIESGANIVKEYYLAILFNRMAEQITIIASSEGGMDIEKVAKESPEKIAKVGIDPQIGFKMFHGLEVARVLGLDKDEGKKLISMIAKLYKLYMDKDMNMLEINPLIKTAEGDFYALDAKCSFDDSALYRHPEIAELRDTTEENPAEREAAEFGLSYVKLDGDVACMVNGAGLAMATMDIINYSGAKPANFLDVGGGASPETVAKAFEIILRDKNVKVIFINIFGGIVRCDRIANGILEATKNVEVNIPIVVRLDGTNAAEAKTILDNSNLKNIKAATNLKNGAELVKSLVG.

Residues Lys-46, 53–55, Glu-99, Ala-102, and Glu-107 each bind ATP; that span reads GRG. 2 residues coordinate Mg(2+): Asn-199 and Asp-213. Residues Asn-264 and 321–323 each bind substrate; that span reads GIV.

It belongs to the succinate/malate CoA ligase beta subunit family. Heterotetramer of two alpha and two beta subunits. Requires Mg(2+) as cofactor.

It carries out the reaction succinate + ATP + CoA = succinyl-CoA + ADP + phosphate. The catalysed reaction is GTP + succinate + CoA = succinyl-CoA + GDP + phosphate. It functions in the pathway carbohydrate metabolism; tricarboxylic acid cycle; succinate from succinyl-CoA (ligase route): step 1/1. In terms of biological role, succinyl-CoA synthetase functions in the citric acid cycle (TCA), coupling the hydrolysis of succinyl-CoA to the synthesis of either ATP or GTP and thus represents the only step of substrate-level phosphorylation in the TCA. The beta subunit provides nucleotide specificity of the enzyme and binds the substrate succinate, while the binding sites for coenzyme A and phosphate are found in the alpha subunit. The polypeptide is Succinate--CoA ligase [ADP-forming] subunit beta (Campylobacter jejuni (strain RM1221)).